The following is a 461-amino-acid chain: MTLRIYDTAARKKRVFEPQDAKRVTLYVCGPTVYNYAHIGNARPPVVFDVLRRVLMARYGEDAIVYARNITDIEDKIIAASVASGEPISAITQKYAAIYNADVEALNVIAPTIEPWATGHVPEMIEIIEKLIRKKYAYVGDTGVWFSVPSMPDYGRLSGRKPEDNEAGARVAVDEDKRDPSDFALWKFAKPGEPEDAIWDSPWGRGRPGWHIECSAMAAKHLGRTIDIHGGGVDLTFPHHENEIAQSECAHGEELARYWMHNGFLDMGGEKMSKSLGNVVTVHDLLKAWPGEVLRFALLTAHYRAQLDWTEDLLKQAKTTLDRIYGALRRVWEADGGEARDTGVLRALEDDLGTPDALAELARLASEANTAADLKDAVAMANGRANLLAAGKLLGLLTKTPKEWEQGADTDENSRIDAQVQARVDARVAKDWAEADRIRKALAEEGVEIMDGPAGSTWRRI.

Cys-29 is a Zn(2+) binding site. A 'HIGH' region motif is present at residues 31–41 (PTVYNYAHIGN). Cys-214, His-239, and Glu-243 together coordinate Zn(2+). Residues 271 to 275 (KMSKS) carry the 'KMSKS' region motif. Lys-274 serves as a coordination point for ATP.

It belongs to the class-I aminoacyl-tRNA synthetase family. In terms of assembly, monomer. The cofactor is Zn(2+).

Its subcellular location is the cytoplasm. It carries out the reaction tRNA(Cys) + L-cysteine + ATP = L-cysteinyl-tRNA(Cys) + AMP + diphosphate. The protein is Cysteine--tRNA ligase of Hyphomonas neptunium (strain ATCC 15444).